The primary structure comprises 185 residues: Ribose 1,5-bisphosphate phosphokinase PhnN (185 aa).

10–17 contacts ATP; that stretch reads GPSGSGKD.

The protein belongs to the ribose 1,5-bisphosphokinase family.

The catalysed reaction is alpha-D-ribose 1,5-bisphosphate + ATP = 5-phospho-alpha-D-ribose 1-diphosphate + ADP. The protein operates within metabolic intermediate biosynthesis; 5-phospho-alpha-D-ribose 1-diphosphate biosynthesis; 5-phospho-alpha-D-ribose 1-diphosphate from D-ribose 5-phosphate (route II): step 3/3. Its function is as follows. Catalyzes the phosphorylation of ribose 1,5-bisphosphate to 5-phospho-D-ribosyl alpha-1-diphosphate (PRPP). The polypeptide is Ribose 1,5-bisphosphate phosphokinase PhnN (Escherichia coli O157:H7).